We begin with the raw amino-acid sequence, 951 residues long: Protocadherin-20 (951 aa).

A signal peptide spans 1–60 (MRGRGNARSSQALGVSWCPATWHPRLDMGRLHRPRSSTSYRNLPHLFLFFLFVGPFSCLG). At 61 to 890 (SYSRATELLY…VESVSCMPTL (830 aa)) the chain is on the extracellular side. Cadherin domains are found at residues 64-209 (RATE…APQF), 210-320 (PVSQ…CPLF), 321-535 (TDSQ…APIF), 536-639 (LQPL…SPRF), 640-742 (INKD…PPLV), and 746-863 (QSNM…EPEI). N-linked (GlcNAc...) asparagine glycosylation is present at asparagine 135. 2 N-linked (GlcNAc...) asparagine glycosylation sites follow: asparagine 326 and asparagine 332. Residues asparagine 680, asparagine 748, asparagine 803, asparagine 844, and asparagine 849 are each glycosylated (N-linked (GlcNAc...) asparagine). A helical transmembrane segment spans residues 891 to 911 (VALSVISLGSITLVTGMGIYI). Over 912–951 (CLRKGEKHPREDENLEVQIPLKGKIDLHMRERKPMDISNI) the chain is Cytoplasmic.

It localises to the cell membrane. Potential calcium-dependent cell-adhesion protein. In Homo sapiens (Human), this protein is Protocadherin-20 (PCDH20).